The sequence spans 160 residues: SsrA-binding protein (160 aa).

The disordered stretch occupies residues Lys131–Asp160.

This sequence belongs to the SmpB family.

The protein localises to the cytoplasm. Functionally, required for rescue of stalled ribosomes mediated by trans-translation. Binds to transfer-messenger RNA (tmRNA), required for stable association of tmRNA with ribosomes. tmRNA and SmpB together mimic tRNA shape, replacing the anticodon stem-loop with SmpB. tmRNA is encoded by the ssrA gene; the 2 termini fold to resemble tRNA(Ala) and it encodes a 'tag peptide', a short internal open reading frame. During trans-translation Ala-aminoacylated tmRNA acts like a tRNA, entering the A-site of stalled ribosomes, displacing the stalled mRNA. The ribosome then switches to translate the ORF on the tmRNA; the nascent peptide is terminated with the 'tag peptide' encoded by the tmRNA and targeted for degradation. The ribosome is freed to recommence translation, which seems to be the essential function of trans-translation. The polypeptide is SsrA-binding protein (Pseudomonas fluorescens (strain Pf0-1)).